A 254-amino-acid chain; its full sequence is Urease accessory protein UreF (254 aa).

Basic and acidic residues predominate over residues 1–11 (MDKGKSVKSTE). Residues 1–25 (MDKGKSVKSTEKSVGIPPKTPKTDN) are disordered.

Belongs to the UreF family. As to quaternary structure, ureH, UreF and UreG form a complex that acts as a GTP-hydrolysis-dependent molecular chaperone, activating the urease apoprotein by helping to assemble the nickel containing metallocenter of UreC. The UreE protein probably delivers the nickel.

It localises to the cytoplasm. Its function is as follows. Required for maturation of urease via the functional incorporation of the urease nickel metallocenter. The chain is Urease accessory protein UreF from Helicobacter pylori (strain P12).